The following is a 512-amino-acid chain: 2,3-bisphosphoglycerate-independent phosphoglycerate mutase (512 aa).

Mn(2+) is bound by residues Asp11 and Ser61. Ser61 acts as the Phosphoserine intermediate in catalysis. Substrate is bound by residues His122, 152–153, Arg184, Arg190, 259–262, and Lys332; these read RD and RADR. Residues Asp399, His403, Asp440, His441, and His459 each contribute to the Mn(2+) site.

Belongs to the BPG-independent phosphoglycerate mutase family. As to quaternary structure, monomer. Requires Mn(2+) as cofactor.

It carries out the reaction (2R)-2-phosphoglycerate = (2R)-3-phosphoglycerate. The protein operates within carbohydrate degradation; glycolysis; pyruvate from D-glyceraldehyde 3-phosphate: step 3/5. Catalyzes the interconversion of 2-phosphoglycerate and 3-phosphoglycerate. This Francisella tularensis subsp. holarctica (strain FTNF002-00 / FTA) protein is 2,3-bisphosphoglycerate-independent phosphoglycerate mutase.